We begin with the raw amino-acid sequence, 567 residues long: Type 2 DNA topoisomerase 6 subunit B (567 aa).

ATP is bound by residues N46, D78, 99 to 100 (TK), 109 to 116 (GQQGIGIS), and K472.

The protein belongs to the TOP6B family. In terms of assembly, homodimer. Heterotetramer of two Top6A and two Top6B chains.

The enzyme catalyses ATP-dependent breakage, passage and rejoining of double-stranded DNA.. Its function is as follows. Relaxes both positive and negative superturns and exhibits a strong decatenase activity. The polypeptide is Type 2 DNA topoisomerase 6 subunit B (Thermococcus kodakarensis (strain ATCC BAA-918 / JCM 12380 / KOD1) (Pyrococcus kodakaraensis (strain KOD1))).